Reading from the N-terminus, the 396-residue chain is Tryptophan synthase beta chain (396 aa).

Lys90 is modified (N6-(pyridoxal phosphate)lysine).

The protein belongs to the TrpB family. As to quaternary structure, tetramer of two alpha and two beta chains. Pyridoxal 5'-phosphate is required as a cofactor.

The enzyme catalyses (1S,2R)-1-C-(indol-3-yl)glycerol 3-phosphate + L-serine = D-glyceraldehyde 3-phosphate + L-tryptophan + H2O. Its pathway is amino-acid biosynthesis; L-tryptophan biosynthesis; L-tryptophan from chorismate: step 5/5. Functionally, the beta subunit is responsible for the synthesis of L-tryptophan from indole and L-serine. The protein is Tryptophan synthase beta chain of Clostridium kluyveri (strain NBRC 12016).